Consider the following 378-residue polypeptide: Erythronate-4-phosphate dehydrogenase (378 aa).

Substrate is bound by residues Ser-45 and Thr-66. Residues Asp-146 and Thr-175 each coordinate NAD(+). The active site involves Arg-208. An NAD(+)-binding site is contributed by Asp-232. Glu-237 is a catalytic residue. Catalysis depends on His-254, which acts as the Proton donor. Gly-257 lines the NAD(+) pocket. Residue Tyr-258 participates in substrate binding.

Belongs to the D-isomer specific 2-hydroxyacid dehydrogenase family. PdxB subfamily. Homodimer.

It localises to the cytoplasm. It catalyses the reaction 4-phospho-D-erythronate + NAD(+) = (R)-3-hydroxy-2-oxo-4-phosphooxybutanoate + NADH + H(+). Its pathway is cofactor biosynthesis; pyridoxine 5'-phosphate biosynthesis; pyridoxine 5'-phosphate from D-erythrose 4-phosphate: step 2/5. In terms of biological role, catalyzes the oxidation of erythronate-4-phosphate to 3-hydroxy-2-oxo-4-phosphonooxybutanoate. In Escherichia coli O157:H7, this protein is Erythronate-4-phosphate dehydrogenase.